Consider the following 288-residue polypeptide: Sulfhydrogenase 2 subunit gamma (288 aa).

An FAD-binding FR-type domain is found at 4 to 103 (YRSYDARIIE…RGPYGNGFPM (100 aa)). 4 residues coordinate [2Fe-2S] cluster: Cys250, Cys255, Cys258, and Cys270.

As to quaternary structure, dimer of heterotetramer of alpha, beta, gamma and delta subunits. The nickel-containing alpha and delta subunits constitute the hydrogenase activity. The beta and gamma subunits (flavin-containing dimer) constitute the sulfur reductase activity. It depends on FAD as a cofactor. [2Fe-2S] cluster is required as a cofactor.

It localises to the cytoplasm. It catalyses the reaction n sulfur + H2 = (n-1) sulfur + hydrogen sulfide + H(+). Functionally, part of a bifunctional enzyme complex that functions as a hydrogen-evolving hydrogenase with sulfur-reducing activity. May play a role in hydrogen cycling during fermentative growth. Activity exhibited with NAD in addition to NADPH. The beta and gamma subunits form the sulfur-reducing component that catalyzes the cytoplasmic production of hydrogen sulfide in the presence of elemental sulfur. The protein is Sulfhydrogenase 2 subunit gamma of Pyrococcus furiosus (strain ATCC 43587 / DSM 3638 / JCM 8422 / Vc1).